The chain runs to 246 residues: PF03932 family protein CutC (246 aa).

Belongs to the CutC family.

It is found in the cytoplasm. The chain is PF03932 family protein CutC from Treponema denticola (strain ATCC 35405 / DSM 14222 / CIP 103919 / JCM 8153 / KCTC 15104).